A 779-amino-acid polypeptide reads, in one-letter code: Acyl-homoserine lactone acylase PvdQ (779 aa).

A signal peptide spans 1–25; the sequence is MIISRPLCSFVFAGLSFAVILPAQA. A propeptide spans 202 to 223 (spacer peptide); sequence AQQAQALQLAAARNQRFALERG. The active-site Nucleophile is the S224. Positions 731-746 are enriched in polar residues; sequence ESSNPQSAHSSDQTEA. A disordered region spans residues 731 to 750; it reads ESSNPQSAHSSDQTEAFSKK.

This sequence belongs to the peptidase S45 family. As to quaternary structure, heterodimer of an alpha subunit and a beta subunit processed from the same precursor.

Its subcellular location is the periplasm. It catalyses the reaction an N-acyl-L-homoserine lactone + H2O = L-homoserine lactone + a carboxylate. Functionally, catalyzes the deacylation of acyl-homoserine lactone (AHL or acyl-HSL), releasing homoserine lactone (HSL) and the corresponding fatty acid. Possesses a specificity for the degradation of long-chain acyl-HSLs (side chains of 11 to 14 carbons in length). This chain is Acyl-homoserine lactone acylase PvdQ (pvdQ), found in Pseudomonas syringae pv. syringae (strain B728a).